A 182-amino-acid chain; its full sequence is Ribosome-recycling factor (182 aa).

The protein belongs to the RRF family.

It is found in the cytoplasm. In terms of biological role, responsible for the release of ribosomes from messenger RNA at the termination of protein biosynthesis. May increase the efficiency of translation by recycling ribosomes from one round of translation to another. In Cyanothece sp. (strain PCC 7425 / ATCC 29141), this protein is Ribosome-recycling factor.